We begin with the raw amino-acid sequence, 264 residues long: tRNA (guanine-N(1)-)-methyltransferase (264 aa).

Residues Gly125 and Leu145 to Leu150 each bind S-adenosyl-L-methionine.

The protein belongs to the RNA methyltransferase TrmD family. In terms of assembly, homodimer.

Its subcellular location is the cytoplasm. The enzyme catalyses guanosine(37) in tRNA + S-adenosyl-L-methionine = N(1)-methylguanosine(37) in tRNA + S-adenosyl-L-homocysteine + H(+). Its function is as follows. Specifically methylates guanosine-37 in various tRNAs. The protein is tRNA (guanine-N(1)-)-methyltransferase of Burkholderia cenocepacia (strain ATCC BAA-245 / DSM 16553 / LMG 16656 / NCTC 13227 / J2315 / CF5610) (Burkholderia cepacia (strain J2315)).